Consider the following 311-residue polypeptide: Lipoyl synthase (311 aa).

7 residues coordinate [4Fe-4S] cluster: Cys47, Cys52, Cys58, Cys73, Cys77, Cys80, and Ser286. The Radical SAM core domain occupies 59 to 276 (WSRHTATYLA…RSVGESLGLF (218 aa)).

The protein belongs to the radical SAM superfamily. Lipoyl synthase family. [4Fe-4S] cluster serves as cofactor.

The protein resides in the cytoplasm. The enzyme catalyses [[Fe-S] cluster scaffold protein carrying a second [4Fe-4S](2+) cluster] + N(6)-octanoyl-L-lysyl-[protein] + 2 oxidized [2Fe-2S]-[ferredoxin] + 2 S-adenosyl-L-methionine + 4 H(+) = [[Fe-S] cluster scaffold protein] + N(6)-[(R)-dihydrolipoyl]-L-lysyl-[protein] + 4 Fe(3+) + 2 hydrogen sulfide + 2 5'-deoxyadenosine + 2 L-methionine + 2 reduced [2Fe-2S]-[ferredoxin]. It participates in protein modification; protein lipoylation via endogenous pathway; protein N(6)-(lipoyl)lysine from octanoyl-[acyl-carrier-protein]: step 2/2. Catalyzes the radical-mediated insertion of two sulfur atoms into the C-6 and C-8 positions of the octanoyl moiety bound to the lipoyl domains of lipoate-dependent enzymes, thereby converting the octanoylated domains into lipoylated derivatives. The polypeptide is Lipoyl synthase (Chlamydia trachomatis serovar A (strain ATCC VR-571B / DSM 19440 / HAR-13)).